The sequence spans 167 residues: Peptidoglycan L-alanyl-D-glutamate endopeptidase CwlK (167 aa).

A signal peptide spans 1–26 (MNLPAKTFVILCILFLLDLCFSYIRH).

Belongs to the peptidase M15C family.

The protein localises to the cell membrane. Its function is as follows. Cleaves the linkage of the L-alanine-D-glutamic acid of B.subtilis cell wall. The protein is Peptidoglycan L-alanyl-D-glutamate endopeptidase CwlK (cwlK) of Bacillus subtilis (strain 168).